Here is a 236-residue protein sequence, read N- to C-terminus: 1-(5-phosphoribosyl)-5-[(5-phosphoribosylamino)methylideneamino] imidazole-4-carboxamide isomerase (236 aa).

Asp-8 functions as the Proton acceptor in the catalytic mechanism. The active-site Proton donor is Asp-127.

It belongs to the HisA/HisF family.

It is found in the cytoplasm. It catalyses the reaction 1-(5-phospho-beta-D-ribosyl)-5-[(5-phospho-beta-D-ribosylamino)methylideneamino]imidazole-4-carboxamide = 5-[(5-phospho-1-deoxy-D-ribulos-1-ylimino)methylamino]-1-(5-phospho-beta-D-ribosyl)imidazole-4-carboxamide. It functions in the pathway amino-acid biosynthesis; L-histidine biosynthesis; L-histidine from 5-phospho-alpha-D-ribose 1-diphosphate: step 4/9. The sequence is that of 1-(5-phosphoribosyl)-5-[(5-phosphoribosylamino)methylideneamino] imidazole-4-carboxamide isomerase from Campylobacter hominis (strain ATCC BAA-381 / DSM 21671 / CCUG 45161 / LMG 19568 / NCTC 13146 / CH001A).